Reading from the N-terminus, the 337-residue chain is tRNA N6-adenosine threonylcarbamoyltransferase (337 aa).

2 residues coordinate Fe cation: H111 and H115. Residues 134 to 138 (LVSGG), D167, G180, and N272 contribute to the substrate site. D300 is a binding site for Fe cation.

The protein belongs to the KAE1 / TsaD family. It depends on Fe(2+) as a cofactor.

The protein localises to the cytoplasm. The catalysed reaction is L-threonylcarbamoyladenylate + adenosine(37) in tRNA = N(6)-L-threonylcarbamoyladenosine(37) in tRNA + AMP + H(+). Required for the formation of a threonylcarbamoyl group on adenosine at position 37 (t(6)A37) in tRNAs that read codons beginning with adenine. Is involved in the transfer of the threonylcarbamoyl moiety of threonylcarbamoyl-AMP (TC-AMP) to the N6 group of A37, together with TsaE and TsaB. TsaD likely plays a direct catalytic role in this reaction. The protein is tRNA N6-adenosine threonylcarbamoyltransferase of Yersinia pseudotuberculosis serotype I (strain IP32953).